The primary structure comprises 264 residues: Major prion protein (264 aa).

An N-terminal signal peptide occupies residues 1-24 (MVKSHIGSWILVLFVAMWSDVGLC). The interval 25–41 (KKRPKPGGGWNTGGSRY) is interaction with ADGRG6. The tract at residues 25–241 (KKRPKPGGGW…ESQAYYQRGA (217 aa)) is interaction with GRB2, ERI3 and SYN1. The tract at residues 28-119 (PKPGGGWNTG…WNKPSKPKTN (92 aa)) is disordered. Tandem repeats lie at residues 54–62 (PQGGGGWGQ), 63–70 (PHGGGWGQ), 71–78 (PHGGGWGQ), 79–86 (PHGGGWGQ), 87–94 (PHGGGWGQ), and 95–103 (PHGGGGWGQ). The interval 54 to 103 (PQGGGGWGQPHGGGWGQPHGGGWGQPHGGGWGQPHGGGWGQPHGGGGWGQ) is 6 X 8 AA tandem repeats of P-H-G-G-G-W-G-Q. Residues 55-107 (QGGGGWGQPHGGGWGQPHGGGWGQPHGGGWGQPHGGGWGQPHGGGGWGQGGTH) show a composition bias toward gly residues. Cu(2+) is bound by residues His-72, Gly-73, Gly-74, His-80, Gly-81, Gly-82, His-88, Gly-89, Gly-90, His-96, Gly-98, and Gly-99. Cys-190 and Cys-225 are joined by a disulfide. Residues Asn-192 and Asn-208 are each glycosylated (N-linked (GlcNAc...) asparagine). Ala-241 carries GPI-anchor amidated alanine lipidation. The propeptide at 242–264 (SVILFSSPPVILLISFLIFLIVG) is removed in mature form.

Belongs to the prion family. Monomer and homodimer. Has a tendency to aggregate into amyloid fibrils containing a cross-beta spine, formed by a steric zipper of superposed beta-strands. Soluble oligomers may represent an intermediate stage on the path to fibril formation. Copper binding may promote oligomerization. Interacts with GRB2, APP, ERI3/PRNPIP and SYN1. Mislocalized cytosolically exposed PrP interacts with MGRN1; this interaction alters MGRN1 subcellular location and causes lysosomal enlargement. Interacts with APP. Interacts with KIAA1191. Interacts with ADGRG6.

Its subcellular location is the cell membrane. It localises to the golgi apparatus. Functionally, its primary physiological function is unclear. May play a role in neuronal development and synaptic plasticity. May be required for neuronal myelin sheath maintenance. May promote myelin homeostasis through acting as an agonist for ADGRG6 receptor. May play a role in iron uptake and iron homeostasis. Soluble oligomers are toxic to cultured neuroblastoma cells and induce apoptosis (in vitro). Association with GPC1 (via its heparan sulfate chains) targets PRNP to lipid rafts. Also provides Cu(2+) or Zn(2+) for the ascorbate-mediated GPC1 deaminase degradation of its heparan sulfate side chains. The protein is Major prion protein (PRNP) of Bos indicus x Bos taurus (Hybrid cattle).